A 195-amino-acid chain; its full sequence is Protein GrpE (195 aa).

Polar residues predominate over residues M1–Q24. The disordered stretch occupies residues M1–E40.

The protein belongs to the GrpE family. In terms of assembly, homodimer.

It is found in the cytoplasm. In terms of biological role, participates actively in the response to hyperosmotic and heat shock by preventing the aggregation of stress-denatured proteins, in association with DnaK and GrpE. It is the nucleotide exchange factor for DnaK and may function as a thermosensor. Unfolded proteins bind initially to DnaJ; upon interaction with the DnaJ-bound protein, DnaK hydrolyzes its bound ATP, resulting in the formation of a stable complex. GrpE releases ADP from DnaK; ATP binding to DnaK triggers the release of the substrate protein, thus completing the reaction cycle. Several rounds of ATP-dependent interactions between DnaJ, DnaK and GrpE are required for fully efficient folding. In Sodalis glossinidius (strain morsitans), this protein is Protein GrpE.